Here is a 30-residue protein sequence, read N- to C-terminus: Cycloviolacin-O10 (30 aa).

The segment at residues 1–30 (GIPCGESCVYIPCLTSAVGCSCKSKVCYRN) is a cross-link (cyclopeptide (Gly-Asn)). 3 disulfide bridges follow: Cys-4–Cys-20, Cys-8–Cys-22, and Cys-13–Cys-27.

This is a cyclic peptide. Expressed in petals and roots but not in leaves, petioles and runners (at protein level).

Its function is as follows. Probably participates in a plant defense mechanism. This is Cycloviolacin-O10 from Viola odorata (Sweet violet).